The primary structure comprises 89 residues: Large ribosomal subunit protein bL31B (89 aa).

This sequence belongs to the bacterial ribosomal protein bL31 family. Type B subfamily. In terms of assembly, part of the 50S ribosomal subunit.

The protein is Large ribosomal subunit protein bL31B of Pseudomonas fluorescens (strain ATCC BAA-477 / NRRL B-23932 / Pf-5).